A 239-amino-acid polypeptide reads, in one-letter code: Lactate utilization protein A (239 aa).

The protein belongs to the LutA/YkgE family.

Is involved in L-lactate degradation and allows cells to grow with lactate as the sole carbon source. The sequence is that of Lactate utilization protein A from Bacillus cereus (strain B4264).